Consider the following 171-residue polypeptide: Sec-independent protein translocase protein TatB (171 aa).

A helical transmembrane segment spans residues 1 to 21 (MFDIGFSELLLVFIIGLVVLG). The segment at 117 to 171 (KDNEAAHEGVTPAAAQTQASSPEQKPETTPEPVVKPAADAEPKTAAPSPSSSDKP) is disordered. A compositionally biased stretch (polar residues) spans 130-139 (AAQTQASSPE).

The protein belongs to the TatB family. As to quaternary structure, the Tat system comprises two distinct complexes: a TatABC complex, containing multiple copies of TatA, TatB and TatC subunits, and a separate TatA complex, containing only TatA subunits. Substrates initially bind to the TatABC complex, which probably triggers association of the separate TatA complex to form the active translocon.

It localises to the cell inner membrane. In terms of biological role, part of the twin-arginine translocation (Tat) system that transports large folded proteins containing a characteristic twin-arginine motif in their signal peptide across membranes. Together with TatC, TatB is part of a receptor directly interacting with Tat signal peptides. TatB may form an oligomeric binding site that transiently accommodates folded Tat precursor proteins before their translocation. In Escherichia coli O157:H7, this protein is Sec-independent protein translocase protein TatB.